We begin with the raw amino-acid sequence, 272 residues long: NH(3)-dependent NAD(+) synthetase (272 aa).

Residue G45–S52 participates in ATP binding. A Mg(2+)-binding site is contributed by D51. R138 serves as a coordination point for deamido-NAD(+). T158 serves as a coordination point for ATP. A Mg(2+)-binding site is contributed by E163. 2 residues coordinate deamido-NAD(+): K171 and D178. ATP is bound by residues K187 and T209. Residue H258–K259 coordinates deamido-NAD(+).

Belongs to the NAD synthetase family. In terms of assembly, homodimer.

It carries out the reaction deamido-NAD(+) + NH4(+) + ATP = AMP + diphosphate + NAD(+) + H(+). Its pathway is cofactor biosynthesis; NAD(+) biosynthesis; NAD(+) from deamido-NAD(+) (ammonia route): step 1/1. Functionally, catalyzes the ATP-dependent amidation of deamido-NAD to form NAD. Uses ammonia as a nitrogen source. The chain is NH(3)-dependent NAD(+) synthetase from Bacillus mycoides (strain KBAB4) (Bacillus weihenstephanensis).